The sequence spans 442 residues: Alpha-1,6-mannosyl-glycoprotein 2-beta-N-acetylglucosaminyltransferase (442 aa).

Residues 1–9 (MRFRIYKRK) lie on the Cytoplasmic side of the membrane. Residues 10 to 29 (VLILTLVVAACGFVLWSSNG) traverse the membrane as a helical; Signal-anchor for type II membrane protein segment. Residues 30 to 442 (RQRKSDALGP…ELCKSYRRLQ (413 aa)) lie on the Lumenal side of the membrane. Asn-64 and Asn-81 each carry an N-linked (GlcNAc...) asparagine glycan. Substrate contacts are provided by residues 118–122 (QVHNR) and Asp-149. An intrachain disulfide couples Cys-191 to Cys-205. 224 to 228 (QTKHH) serves as a coordination point for substrate. Position 256 (Asp-256) interacts with Mn(2+). An intrachain disulfide couples Cys-278 to Cys-281. Residue Arg-293 coordinates substrate. 3 disulfides stabilise this stretch: Cys-329/Cys-352, Cys-334/Cys-435, and Cys-373/Cys-381. A Mn(2+)-binding site is contributed by His-369.

Belongs to the glycosyltransferase 16 (GT16) protein family. In terms of assembly, homodimer. The cofactor is Mn(2+). As to expression, detected in liver, lung, testis, kidney, brain, spleen, thymus, uterus and intestine.

It localises to the golgi apparatus membrane. It carries out the reaction an N(4)-{beta-D-GlcNAc-(1-&gt;2)-alpha-D-Man-(1-&gt;3)-[alpha-D-Man-(1-&gt;6)]-beta-D-Man-(1-&gt;4)-beta-D-GlcNAc-(1-&gt;4)-beta-D-GlcNAc}-L-asparaginyl-[protein] + UDP-N-acetyl-alpha-D-glucosamine = N(4)-{beta-D-GlcNAc-(1-&gt;2)-alpha-D-Man-(1-&gt;3)-[beta-D-GlcNAc-(1-&gt;2)-alpha-D-Man-(1-&gt;6)]-beta-D-Man-(1-&gt;4)-beta-D-GlcNAc-(1-&gt;4)-beta-D-GlcNAc}-L-asparaginyl-[protein] + UDP + H(+). The protein operates within protein modification; protein glycosylation. Its function is as follows. Plays an essential role in protein N-glycosylation. Catalyzes the transfer of N-acetylglucosamine (GlcNAc) onto the free terminal mannose moiety in the core structure of the nascent N-linked glycan chain, giving rise to the second branch in complex glycans. The sequence is that of Alpha-1,6-mannosyl-glycoprotein 2-beta-N-acetylglucosaminyltransferase (Mgat2) from Mus musculus (Mouse).